We begin with the raw amino-acid sequence, 358 residues long: Alanine racemase (358 aa).

K34 (proton acceptor; specific for D-alanine) is an active-site residue. K34 bears the N6-(pyridoxal phosphate)lysine mark. R129 lines the substrate pocket. Y254 (proton acceptor; specific for L-alanine) is an active-site residue. M302 provides a ligand contact to substrate.

This sequence belongs to the alanine racemase family. Pyridoxal 5'-phosphate is required as a cofactor.

It catalyses the reaction L-alanine = D-alanine. Its pathway is amino-acid biosynthesis; D-alanine biosynthesis; D-alanine from L-alanine: step 1/1. Catalyzes the interconversion of L-alanine and D-alanine. May also act on other amino acids. In Vibrio parahaemolyticus serotype O3:K6 (strain RIMD 2210633), this protein is Alanine racemase (alr).